Consider the following 548-residue polypeptide: T-complex protein 1 subunit theta (548 aa).

N-acetylalanine is present on alanine 2. Residues tyrosine 47 and glycine 48 each coordinate ADP. Residue aspartate 99 coordinates Mg(2+). ADP contacts are provided by glycine 100, threonine 101, asparagine 102, phenylalanine 103, methionine 169, serine 170, lysine 171, glycine 412, and aspartate 499. ATP contacts are provided by glycine 100, threonine 101, and asparagine 102. ATP is bound by residues serine 170, lysine 171, glycine 412, aspartate 499, and lysine 504. A Phosphotyrosine modification is found at tyrosine 505. The interval 529–548 (PAGGPKPPSGKKDWDEDQND) is disordered.

As to quaternary structure, component of the chaperonin-containing T-complex (TRiC), a hexadecamer composed of two identical back-to-back stacked rings enclosing a protein folding chamber. Each ring is made up of eight different subunits: TCP1/CCT1, CCT2, CCT3, CCT4, CCT5, CCT6A/CCT6, CCT7, CCT8.

The protein resides in the cytoplasm. Its subcellular location is the cytoskeleton. The protein localises to the microtubule organizing center. It is found in the centrosome. It localises to the cilium basal body. It carries out the reaction ATP + H2O = ADP + phosphate + H(+). Component of the chaperonin-containing T-complex (TRiC), a molecular chaperone complex that assists the folding of actin, tubulin and other proteins upon ATP hydrolysis. In Gallus gallus (Chicken), this protein is T-complex protein 1 subunit theta.